Reading from the N-terminus, the 254-residue chain is Triosephosphate isomerase (254 aa).

Residue 9 to 11 (NWK) participates in substrate binding. Histidine 98 serves as the catalytic Electrophile. The active-site Proton acceptor is glutamate 170. Substrate is bound by residues glycine 176, serine 215, and 236–237 (GG).

It belongs to the triosephosphate isomerase family. In terms of assembly, homodimer.

It is found in the cytoplasm. It catalyses the reaction D-glyceraldehyde 3-phosphate = dihydroxyacetone phosphate. Its pathway is carbohydrate biosynthesis; gluconeogenesis. It functions in the pathway carbohydrate degradation; glycolysis; D-glyceraldehyde 3-phosphate from glycerone phosphate: step 1/1. Its function is as follows. Involved in the gluconeogenesis. Catalyzes stereospecifically the conversion of dihydroxyacetone phosphate (DHAP) to D-glyceraldehyde-3-phosphate (G3P). The polypeptide is Triosephosphate isomerase (Buchnera aphidicola subsp. Cinara cedri (strain Cc)).